The sequence spans 215 residues: Cytochrome b6 (215 aa).

Residues 32-52 (IFYCLGGITLTCFLVQVATGF) form a helical membrane-spanning segment. Cysteine 35 lines the heme c pocket. Heme b is bound by residues histidine 86 and histidine 100. 3 helical membrane-spanning segments follow: residues 90–110 (ASMMVLMMILHVFRVYLTGGF), 116–136 (LTWVTGVVLAVLTASFGVTGY), and 186–206 (LHTFVLPLLTAVFMLMHFPMI). Heme b is bound by residues histidine 187 and histidine 202.

Belongs to the cytochrome b family. PetB subfamily. In terms of assembly, the 4 large subunits of the cytochrome b6-f complex are cytochrome b6, subunit IV (17 kDa polypeptide, PetD), cytochrome f and the Rieske protein, while the 4 small subunits are PetG, PetL, PetM and PetN. The complex functions as a dimer. Heme b serves as cofactor. It depends on heme c as a cofactor.

The protein localises to the plastid. It is found in the chloroplast thylakoid membrane. Component of the cytochrome b6-f complex, which mediates electron transfer between photosystem II (PSII) and photosystem I (PSI), cyclic electron flow around PSI, and state transitions. This chain is Cytochrome b6, found in Solanum bulbocastanum (Wild potato).